Reading from the N-terminus, the 300-residue chain is Tumor necrosis factor receptor superfamily member 6B (300 aa).

A signal peptide spans 1–29; the sequence is MRALEGPGLSLLCLVLALPALLPVPAVRG. 4 TNFR-Cys repeats span residues 31–70, 72–113, 115–150, and 152–193; these read AETPTYPWRDAETGERLVCAQCPPGTFVQRPCRRDSPTTC, PCPP…NRAC, CRTGFFAHAGFCLEHASCPPGAGVIAPGTPSQNTQC, and PCPP…DTLC. Intrachain disulfides connect Cys49/Cys62, Cys52/Cys70, Cys73/Cys88, Cys91/Cys105, Cys95/Cys113, Cys115/Cys126, Cys132/Cys150, and Cys153/Cys168. A glycan (N-linked (GlcNAc...) asparagine) is linked at Asn173. Cys174 and Cys193 are oxidised to a cystine.

As to expression, detected in fetal lung, brain and liver. Detected in adult stomach, spinal cord, lymph node, trachea, spleen, colon and lung. Highly expressed in several primary tumors from colon, stomach, rectum, esophagus and in SW480 colon carcinoma cells.

It is found in the secreted. In terms of biological role, decoy receptor that can neutralize the cytotoxic ligands TNFS14/LIGHT, TNFSF15 and TNFSF6/FASL. Protects against apoptosis. This chain is Tumor necrosis factor receptor superfamily member 6B (TNFRSF6B), found in Homo sapiens (Human).